The primary structure comprises 158 residues: Molybdopterin synthase catalytic subunit (158 aa).

Residues 107-108 (HR), lysine 123, and 130-132 (KKE) contribute to the substrate site.

This sequence belongs to the MoaE family. MOCS2B subfamily. As to quaternary structure, heterotetramer; composed of 2 small (mocs2s) and 2 large (mocs2l) subunits.

The protein localises to the cytoplasm. It catalyses the reaction 2 [molybdopterin-synthase sulfur-carrier protein]-C-terminal-Gly-aminoethanethioate + cyclic pyranopterin phosphate + H2O = molybdopterin + 2 [molybdopterin-synthase sulfur-carrier protein]-C-terminal Gly-Gly + 2 H(+). Its pathway is cofactor biosynthesis; molybdopterin biosynthesis. In terms of biological role, catalytic subunit of the molybdopterin synthase complex, a complex that catalyzes the conversion of precursor Z into molybdopterin. Acts by mediating the incorporation of 2 sulfur atoms from thiocarboxylated mocs2s into precursor Z to generate a dithiolene group. In Dictyostelium discoideum (Social amoeba), this protein is Molybdopterin synthase catalytic subunit (mocs2l).